The following is a 654-amino-acid chain: MATPLIELCDIRKAYGGVDTPRVEVLRGISLRVHAGEFVAIVGASGSGKSTLMNILGCLDRPSAGSYRFAGKDVAELDSDELAWLRREAFGFVFQGYHLIPSGSAQENVEMPAIYAGTPAAERQARASALLGRLGLASRTANRPHQLSGGQQQRVSIARALMNGGHIILADEPTGALDSHSGAEVMALLDELASQGHVIILITHDREVAARAHRVIEIRDGLVISDSAADQPPAHAHKGIQAEELRQRLDRGATQHGAWKGELLESLQAAWRVMWINRFRTALTLLGIIIGVASVVVMLAVGEGSKRQVMAQMAAFGSNILYLNGSPPTLREPAGRITLDDVAAIGELPQVKHIMPVLGEKMMVRHGNNSQQFYVGGNNTFFPEIFNWPAVEGSFFTETDEASSAAVAVIGQKVREKMLAPGSNPIGQYLLIGNVPFQVVGILAGKGASSGDQDSDGRIVVPFSAAAIRLFGHRDPDYIAIAARDSGQVKDTEAAIDRLLRQRHQGKHDFELTNDAALIQAEARTQNSLSLMLGAIAAISLLVGGIGVMNIMLMTVRERTREIGIRMATGARQRDILRQFLSEAIMLSMVGGLTGIALALVVGASLTLADIAVAFALPAIVGAFACAVITGVVFGFMPARKAARLDPVKALTSE.

Residues 6–245 (IELCDIRKAY…AHKGIQAEEL (240 aa)) enclose the ABC transporter domain. An ATP-binding site is contributed by 43 to 50 (GASGSGKS). The next 4 helical transmembrane spans lie at 282 to 302 (ALTL…LAVG), 529 to 549 (LSLM…IGVM), 584 to 604 (AIML…VVGA), and 614 to 634 (AFAL…GVVF).

Belongs to the ABC transporter superfamily. Macrolide exporter (TC 3.A.1.122) family. As to quaternary structure, part of the tripartite efflux system PvdRT-OpmQ, which is composed of an inner membrane component with both ATPase and permease domains, PvdT, a periplasmic membrane fusion protein, PvdR, and an outer membrane component, OpmQ.

It localises to the cell inner membrane. Its activity is regulated as follows. Has a basal ATPase activity that is stimulated by PvdR. In vitro, interaction with PVD influences the affinity of PvdT to PvdR. Its function is as follows. Part of the tripartite efflux system PvdRT-OpmQ required for the secretion into the extracellular milieu of the siderophore pyoverdine (PVD), which is involved in iron acquisition. This subunit binds PVD and drives its secretion by hydrolyzing ATP. The system is responsible for export of newly synthesized PVD after the final steps of biosynthesis have taken place in the periplasm. It is also responsible for recycling of PVD after internalization of ferri-PVD into the periplasm by the outer-membrane receptor FpvA and release of iron from PVD, thus making PVD available for new cycles of iron uptake. Contributes to resistance against ampicillin. This chain is Pyoverdine export ATP-binding/permease protein PvdT, found in Pseudomonas putida (strain ATCC 47054 / DSM 6125 / CFBP 8728 / NCIMB 11950 / KT2440).